The primary structure comprises 432 residues: Putative transferase At1g60990, chloroplastic (432 aa).

The N-terminal 57 residues, 1–57 (MNLLQSCKDMAMMMRIDSVSHITNTALLPCLYNGTVLRRRSLSLRKCGFRERKFQLR), are a transit peptide targeting the chloroplast.

This sequence belongs to the GcvT family. Expressed in young leaves (at protein level).

Its subcellular location is the plastid. The protein resides in the chloroplast. Folate-dependent protein involved in Fe/S cluster biogenesis. Functionally complements an E.coli mutant defective in ygfZ. The protein is Putative transferase At1g60990, chloroplastic of Arabidopsis thaliana (Mouse-ear cress).